Here is a 103-residue protein sequence, read N- to C-terminus: Large ribosomal subunit protein bL21 (103 aa).

Belongs to the bacterial ribosomal protein bL21 family. Part of the 50S ribosomal subunit. Contacts protein L20.

Its function is as follows. This protein binds to 23S rRNA in the presence of protein L20. This Actinobacillus pleuropneumoniae serotype 5b (strain L20) protein is Large ribosomal subunit protein bL21.